A 694-amino-acid chain; its full sequence is Elongation factor G (694 aa).

Residues 8–287 (EDYRNFGIMA…AVVEFLPAPT (280 aa)) enclose the tr-type G domain. GTP contacts are provided by residues 17-24 (AHIDAGKT), 86-90 (DTPGH), and 140-143 (NKMD).

The protein belongs to the TRAFAC class translation factor GTPase superfamily. Classic translation factor GTPase family. EF-G/EF-2 subfamily.

The protein localises to the cytoplasm. In terms of biological role, catalyzes the GTP-dependent ribosomal translocation step during translation elongation. During this step, the ribosome changes from the pre-translocational (PRE) to the post-translocational (POST) state as the newly formed A-site-bound peptidyl-tRNA and P-site-bound deacylated tRNA move to the P and E sites, respectively. Catalyzes the coordinated movement of the two tRNA molecules, the mRNA and conformational changes in the ribosome. The sequence is that of Elongation factor G from Brucella suis (strain ATCC 23445 / NCTC 10510).